Consider the following 617-residue polypeptide: Dihydroxy-acid dehydratase (617 aa).

Asp81 is a Mg(2+) binding site. [2Fe-2S] cluster is bound at residue Cys122. Mg(2+) contacts are provided by Asp123 and Lys124. Position 124 is an N6-carboxylysine (Lys124). Cys195 lines the [2Fe-2S] cluster pocket. Glu491 contacts Mg(2+). Ser517 acts as the Proton acceptor in catalysis.

This sequence belongs to the IlvD/Edd family. In terms of assembly, homodimer. [2Fe-2S] cluster serves as cofactor. The cofactor is Mg(2+).

The enzyme catalyses (2R)-2,3-dihydroxy-3-methylbutanoate = 3-methyl-2-oxobutanoate + H2O. It carries out the reaction (2R,3R)-2,3-dihydroxy-3-methylpentanoate = (S)-3-methyl-2-oxopentanoate + H2O. Its pathway is amino-acid biosynthesis; L-isoleucine biosynthesis; L-isoleucine from 2-oxobutanoate: step 3/4. It functions in the pathway amino-acid biosynthesis; L-valine biosynthesis; L-valine from pyruvate: step 3/4. Functionally, functions in the biosynthesis of branched-chain amino acids. Catalyzes the dehydration of (2R,3R)-2,3-dihydroxy-3-methylpentanoate (2,3-dihydroxy-3-methylvalerate) into 2-oxo-3-methylpentanoate (2-oxo-3-methylvalerate) and of (2R)-2,3-dihydroxy-3-methylbutanoate (2,3-dihydroxyisovalerate) into 2-oxo-3-methylbutanoate (2-oxoisovalerate), the penultimate precursor to L-isoleucine and L-valine, respectively. This chain is Dihydroxy-acid dehydratase, found in Hydrogenovibrio crunogenus (strain DSM 25203 / XCL-2) (Thiomicrospira crunogena).